A 494-amino-acid polypeptide reads, in one-letter code: UPF0371 protein SP70585_0405 (494 aa).

It belongs to the UPF0371 family.

The sequence is that of UPF0371 protein SP70585_0405 from Streptococcus pneumoniae (strain 70585).